Reading from the N-terminus, the 460-residue chain is Chromosomal replication initiator protein DnaA 2 (460 aa).

The domain I, interacts with DnaA modulators stretch occupies residues 1 to 68 (MRAWEDFLLL…KTSLVNNNGK (68 aa)). A domain II region spans residues 68-102 (KLIRVHITSLDKTAPFYKEKQIQQEKTAYFTMQYG). Residues 103 to 321 (NVNPEMTFGN…DALKLLSKRV (219 aa)) form a domain III, AAA+ region region. ATP contacts are provided by Gly151, Gly153, Lys154, and Thr155. The domain IV, binds dsDNA stretch occupies residues 322 to 460 (AYKKLAQQLL…EFFPEEEISC (139 aa)).

It belongs to the DnaA family. Oligomerizes as a right-handed, spiral filament on DNA at oriC.

It localises to the cytoplasm. Functionally, plays an essential role in the initiation and regulation of chromosomal replication. ATP-DnaA binds to the origin of replication (oriC) to initiate formation of the DNA replication initiation complex once per cell cycle. Binds the DnaA box (a 9 base pair repeat at the origin) and separates the double-stranded (ds)DNA. Forms a right-handed helical filament on oriC DNA; dsDNA binds to the exterior of the filament while single-stranded (ss)DNA is stabiized in the filament's interior. The ATP-DnaA-oriC complex binds and stabilizes one strand of the AT-rich DNA unwinding element (DUE), permitting loading of DNA polymerase. After initiation quickly degrades to an ADP-DnaA complex that is not apt for DNA replication. Binds acidic phospholipids. This chain is Chromosomal replication initiator protein DnaA 2, found in Chlamydia caviae (strain ATCC VR-813 / DSM 19441 / 03DC25 / GPIC) (Chlamydophila caviae).